A 329-amino-acid chain; its full sequence is uncharacterized protein (329 aa).

Coiled-coil stretches lie at residues 57–119 and 224–250; these read KKEE…LQEV and AQRQKQEEVQEVLQEAEKTHQATLGNV.

This is an uncharacterized protein from Macaca fascicularis (Crab-eating macaque).